The sequence spans 23 residues: Fimbrial protein (23 aa).

A disulfide bridge connects residues cysteine 8 and cysteine 21.

Belongs to the N-Me-Phe pilin family. In terms of assembly, the pili are polar flexible filaments of about 5.4 nanometers diameter and 2.5 micrometers average length; they consist of only a single polypeptide chain arranged in a helical configuration of five subunits per turn in the assembled pilus.

It localises to the fimbrium. This Pseudomonas aeruginosa protein is Fimbrial protein (pil).